Consider the following 755-residue polypeptide: Tryptophan 2-monooxygenase (755 aa).

FMN is bound by residues S247, E267, K275, and R295. R295 serves as a coordination point for substrate.

It belongs to the tryptophan 2-monooxygenase family. FMN is required as a cofactor.

It carries out the reaction L-tryptophan + O2 = indole-3-acetamide + CO2 + H2O. The protein operates within plant hormone metabolism; auxin biosynthesis. The chain is Tryptophan 2-monooxygenase (iaaM) from Agrobacterium vitis (Rhizobium vitis).